The chain runs to 225 residues: Uracil-DNA glycosylase (225 aa).

Asp65 (proton acceptor) is an active-site residue.

It belongs to the uracil-DNA glycosylase (UDG) superfamily. UNG family.

The protein localises to the cytoplasm. The enzyme catalyses Hydrolyzes single-stranded DNA or mismatched double-stranded DNA and polynucleotides, releasing free uracil.. Its function is as follows. Excises uracil residues from the DNA which can arise as a result of misincorporation of dUMP residues by DNA polymerase or due to deamination of cytosine. In Anoxybacillus flavithermus (strain DSM 21510 / WK1), this protein is Uracil-DNA glycosylase.